Consider the following 478-residue polypeptide: Glutamate--tRNA ligase (478 aa).

The short motif at 9 to 19 is the 'HIGH' region element; that stretch reads PSPTGLLHIGT. The 'KMSKS' region motif lies at 248–252; it reads KLSKR. Lys-251 is a binding site for ATP.

It belongs to the class-I aminoacyl-tRNA synthetase family. Glutamate--tRNA ligase type 1 subfamily. In terms of assembly, monomer.

It is found in the cytoplasm. It carries out the reaction tRNA(Glu) + L-glutamate + ATP = L-glutamyl-tRNA(Glu) + AMP + diphosphate. Catalyzes the attachment of glutamate to tRNA(Glu) in a two-step reaction: glutamate is first activated by ATP to form Glu-AMP and then transferred to the acceptor end of tRNA(Glu). This chain is Glutamate--tRNA ligase, found in Prochlorococcus marinus subsp. pastoris (strain CCMP1986 / NIES-2087 / MED4).